Consider the following 189-residue polypeptide: Protein jagunal homolog (189 aa).

Residues 1–34 lie on the Cytoplasmic side of the membrane; the sequence is MSSRGVRAAGTDGNDFQNRQRIAQHYQESAQYKS. Residues 35-55 form a helical membrane-spanning segment; it reads VLKWFFVPHFLILVFMWLKVG. Residues 56-75 are Lumenal-facing; that stretch reads SEFLRYNFGWKNAFFERLDM. Residues 76 to 96 traverse the membrane as a helical segment; that stretch reads PAAYPWEYVWCLSFIPIVLAL. The Cytoplasmic segment spans residues 97 to 105; it reads SSFQRNKLK. The helical transmembrane segment at 106 to 126 threads the bilayer; the sequence is VLHYAYYAEFICGIFPCMIGL. Over 127 to 150 the chain is Lumenal; it reads GGQLPELLEYANDMEGSNTPTFKG. A helical membrane pass occupies residues 151–171; that stretch reads IFPMVIIWYIFFAVALQIHGF. Over 172–189 the chain is Cytoplasmic; it reads SMYFMHHLAAAWAPVKRD.

This sequence belongs to the jagunal family.

The protein localises to the endoplasmic reticulum membrane. The chain is Protein jagunal homolog from Caenorhabditis briggsae.